A 465-amino-acid polypeptide reads, in one-letter code: A-type ATP synthase subunit B (465 aa).

This sequence belongs to the ATPase alpha/beta chains family. Has multiple subunits with at least A(3), B(3), C, D, E, F, H, I and proteolipid K(x).

The protein localises to the cell membrane. Its function is as follows. Component of the A-type ATP synthase that produces ATP from ADP in the presence of a proton gradient across the membrane. The B chain is a regulatory subunit. This chain is A-type ATP synthase subunit B, found in Sulfurisphaera tokodaii (strain DSM 16993 / JCM 10545 / NBRC 100140 / 7) (Sulfolobus tokodaii).